The chain runs to 1029 residues: Toll-like receptor 9 (1029 aa).

The N-terminal stretch at 1 to 24 is a signal peptide; sequence MGPYCAPHPLSLLVQAAALAAALA. Topologically, residues 25–815 are extracellular; it reads QGTLPAFLPC…LCLDETLSLD (791 aa). Cys34 and Cys44 are disulfide-bonded. 46–50 is a binding site for DNA; sequence WLFLK. LRR repeat units lie at residues 61–84, 86–109, 121–146, 149–165, 166–189, 197–220, 222–241, 242–267, 282–305, 307–331, 332–355, 362–385, 389–412, 414–439, 469–492, 494–517, 518–541, 543–570, 572–596, 598–620, 625–648, 650–673, 674–697, 699–721, 722–745, and 747–770; these read RANV…DFVH, SNLR…HFPC, VPTL…SLVS, LSRT…FTGL, HALR…AVEV, LGNL…LPPS, DTLL…DLAN, LTAL…CREC, LSRL…WFRG, GRLQ…IFRN, LTQL…HLQL, LVSL…TLRP, LPKL…IFGA, PSLL…LGEV, CNLN…MFTR, SRLQ…QFVP, LTRL…SFTE, PQLE…SFVA, LPSL…LSSA, LRAL…LYLC, LRNL…HLDN, PKSL…SLTV, LPQL…SLPP, TRLQ…FFVL, ANRL…WFGR, and TETL…AFVD. Residue Asn63 is glycosylated (N-linked (GlcNAc...) asparagine). DNA-binding positions include 71-76 and 94-108; these read SNRIHH and KWNC…MHFP. Cys97 and Cys109 are joined by a disulfide. Asn128 is a glycosylation site (N-linked (GlcNAc...) asparagine). Residues Tyr131, Arg151, and 178–180 each bind DNA; that span reads YYK. Residues Cys177 and Cys183 are joined by a disulfide bond. An N-linked (GlcNAc...) asparagine glycan is attached at Asn199. Tyr207 serves as a coordination point for DNA. N-linked (GlcNAc...) asparagine glycosylation is found at Asn209 and Asn241. 2 cysteine pairs are disulfide-bonded: Cys254–Cys267 and Cys257–Cys264. Cys257 is lipidated: S-palmitoyl cysteine. Arg261 is a DNA binding site. Cys264 carries the S-palmitoyl cysteine lipid modification. Residues Asn331, Asn339, and Asn380 are each glycosylated (N-linked (GlcNAc...) asparagine). Cysteines 469 and 498 form a disulfide. Residues Asn472 and Asn511 are each glycosylated (N-linked (GlcNAc...) asparagine). A glycan (N-linked (GlcNAc...) asparagine) is linked at Asn565. Asn667 and Asn692 each carry an N-linked (GlcNAc...) asparagine glycan. An N-linked (GlcNAc...) asparagine glycan is attached at Asn729. 2 disulfides stabilise this stretch: Cys762/Cys788 and Cys764/Cys807. The helical transmembrane segment at 816–836 threads the bilayer; it reads CFGFSLLMVALGLAVPMLHHL. Residues 837-1029 are Cytoplasmic-facing; it reads CGWDLWYCFH…NFCRGPTTAE (193 aa). Residues 864 to 1009 form the TIR domain; that stretch reads LLYDAFVVFD…SFWANLGMAL (146 aa).

This sequence belongs to the Toll-like receptor family. In terms of assembly, monomer and homodimer. Exists as a monomer in the absence of unmethylated cytidine-phosphate-guanosine (CpG) ligand. Proteolytic processing of an insertion loop (Z-loop) is required for homodimerization upon binding to the unmethylated CpG ligand leading to its activation. Interacts with MYD88 via their respective TIR domains. Interacts with BTK. Interacts (via transmembrane domain) with UNC93B1. Interacts with CD300LH; the interaction may promote full activation of TLR9-triggered innate responses. Interacts with CNPY3 and HSP90B1; this interaction is required for proper folding in the endoplasmic reticulum. Interacts with SMPDL3B. Interacts with CD82; this interaction is essential for TLR9-dependent myddosome formation in response to CpG stimulation. Activated by proteolytic cleavage of the flexible loop between repeats LRR14 and LRR15 within the ectodomain. Cleavage requires UNC93B1. Proteolytically processed by first removing the majority of the ectodomain by either asparagine endopeptidase (AEP) or a cathepsin followed by a trimming event that is solely cathepsin mediated and required for optimal receptor signaling. In terms of processing, palmitoylated by ZDHHC3 in the Golgi regulates TLR9 trafficking from the Golgi to endosomes. Depalmitoylation by PPT1 controls the release of TLR9 from UNC93B1 in endosomes.

Its subcellular location is the endoplasmic reticulum membrane. The protein localises to the endosome. It localises to the lysosome. The protein resides in the cytoplasmic vesicle. It is found in the phagosome. In terms of biological role, key component of innate and adaptive immunity. TLRs (Toll-like receptors) control host immune response against pathogens through recognition of molecular patterns specific to microorganisms. TLR9 is a nucleotide-sensing TLR which is activated by unmethylated cytidine-phosphate-guanosine (CpG) dinucleotides. Acts via MYD88 and TRAF6, leading to NF-kappa-B activation, cytokine secretion and the inflammatory response. Upon CpG stimulation, induces B-cell proliferation, activation, survival and antibody production. In Ovis aries (Sheep), this protein is Toll-like receptor 9 (TLR9).